Here is a 240-residue protein sequence, read N- to C-terminus: UPF0309 protein in nagA 3'region (240 aa).

One can recognise an SIS domain in the interval 31–206 (IVKRLVQGGI…CAQIIEILHE (176 aa)).

It belongs to the UPF0309 family.

The sequence is that of UPF0309 protein in nagA 3'region from Lysinibacillus sphaericus (Bacillus sphaericus).